The sequence spans 129 residues: Histone H2A.2 (129 aa).

Residue lysine 5 is modified to N6-acetyllysine. The residue at position 108 (glutamine 108) is an N5-methylglutamine.

This sequence belongs to the histone H2A family. In terms of assembly, the nucleosome is a histone octamer containing two molecules each of H2A, H2B, H3 and H4 assembled in one H3-H4 heterotetramer and two H2A-H2B heterodimers. The octamer wraps approximately 147 bp of DNA. Post-translationally, acetylated by ESA1 to form H2AK4ac.

The protein resides in the nucleus. It is found in the chromosome. In terms of biological role, core component of nucleosome which plays a central role in DNA double strand break (DSB) repair. Nucleosomes wrap and compact DNA into chromatin, limiting DNA accessibility to the cellular machineries which require DNA as a template. Histones thereby play a central role in transcription regulation, DNA repair, DNA replication and chromosomal stability. DNA accessibility is regulated via a complex set of post-translational modifications of histones, also called histone code, and nucleosome remodeling. The protein is Histone H2A.2 (HTA2) of Lodderomyces elongisporus (strain ATCC 11503 / CBS 2605 / JCM 1781 / NBRC 1676 / NRRL YB-4239) (Yeast).